The chain runs to 511 residues: MKEFQGYLEKDRSRQQHLLYPLLFQEYIYALAHDHGLNGSIFSEPVEVFGYDNKSSLALVKRLITRIYQQNYLIISVNDSNQNGFVGDNRFFYSHFYSQMISESFAIIVEIPFSPRLVSDFKEKEIPKYHNLRSIHSIFPFLEDKLSHLNYVSDILIPHPIHMEISVQILQCWIQDIPFLHSLRFFLHEYHNSNSLLVTQKKSIHVFLKENKRLFQFLYNSYVFECEFLLVFTRKQSSYLRLTSFGTFLERTLFYGKIEYFICRNYFHRTLWFFKEPFMHYVRYQGKAILASKGTHLMMKKWKYHFVNFWQYYFHFWTQPYRXHINQLSNSFFYFLGYLSXLLRNSSAVRNQMLENSFLIDTVTKKFDTIVPVIFLIGSLSKAKFCTVSGHPISKPIWADLSDSDILDRFGRICRNLSHYHSGSSKKQGLYQIKYILQLSCARTLARKHKSTVRTFLRRLGSELLEEFFMEEEQVLSLIFPQTTPFTLHGSHRERIWYLDIICINDLVNHS.

This sequence belongs to the intron maturase 2 family. MatK subfamily.

The protein resides in the plastid. It localises to the chloroplast. Its function is as follows. Usually encoded in the trnK tRNA gene intron. Probably assists in splicing its own and other chloroplast group II introns. This is Maturase K from Bowiea volubilis (Climbing onion).